Here is a 131-residue protein sequence, read N- to C-terminus: Prefoldin subunit beta (131 aa).

Disordered regions lie at residues 19–41 (LQET…RESE) and 112–131 (LQGG…AGGA). Low complexity predominate over residues 20-35 (QETAQQVAQQKQQAET). Residues 114-131 (GGAGGGPMGPGGPGAGGA) are compositionally biased toward gly residues.

This sequence belongs to the prefoldin subunit beta family. Heterohexamer of two alpha and four beta subunits.

The protein resides in the cytoplasm. Its function is as follows. Molecular chaperone capable of stabilizing a range of proteins. Seems to fulfill an ATP-independent, HSP70-like function in archaeal de novo protein folding. The polypeptide is Prefoldin subunit beta (Natronomonas pharaonis (strain ATCC 35678 / DSM 2160 / CIP 103997 / JCM 8858 / NBRC 14720 / NCIMB 2260 / Gabara) (Halobacterium pharaonis)).